The chain runs to 356 residues: Phosphoribosylformylglycinamidine cyclo-ligase (356 aa).

The protein belongs to the AIR synthase family.

Its subcellular location is the cytoplasm. It carries out the reaction 2-formamido-N(1)-(5-O-phospho-beta-D-ribosyl)acetamidine + ATP = 5-amino-1-(5-phospho-beta-D-ribosyl)imidazole + ADP + phosphate + H(+). Its pathway is purine metabolism; IMP biosynthesis via de novo pathway; 5-amino-1-(5-phospho-D-ribosyl)imidazole from N(2)-formyl-N(1)-(5-phospho-D-ribosyl)glycinamide: step 2/2. In Acinetobacter baylyi (strain ATCC 33305 / BD413 / ADP1), this protein is Phosphoribosylformylglycinamidine cyclo-ligase.